Reading from the N-terminus, the 427-residue chain is Trigger factor (427 aa).

Residues 163–248 (GDTVVIDFVG…VHEVKAKEVP (86 aa)) enclose the PPIase FKBP-type domain.

The protein belongs to the FKBP-type PPIase family. Tig subfamily.

It is found in the cytoplasm. It catalyses the reaction [protein]-peptidylproline (omega=180) = [protein]-peptidylproline (omega=0). Functionally, involved in protein export. Acts as a chaperone by maintaining the newly synthesized protein in an open conformation. Functions as a peptidyl-prolyl cis-trans isomerase. The polypeptide is Trigger factor (Streptococcus equi subsp. zooepidemicus (strain MGCS10565)).